Consider the following 258-residue polypeptide: MKITKIEKKKRLYLLELDDSEKLYITEDTIVRFMLSKGMEITEQELSEIQDYAQFSYGKNLALYHLSFKQRTAKEVKDFLTQHDIQPEIISQVLDNLKKDNWINDRKYAHSFIQSNLLTGDKGAFVLKQKLSQKGISSTIIEEELSQFDFTELTNKVAEKLLKKYQEKLPSKALQDKILQSLINKGFSYSQAKTAYQHLEIEEDQENQQELLYKELDKQYRKYSKKYDGYDLKQRLTQALARKGYDFSDIASALREYL.

It belongs to the RecX family.

It localises to the cytoplasm. In terms of biological role, modulates RecA activity. The polypeptide is Regulatory protein RecX (Streptococcus sanguinis (strain SK36)).